An 80-amino-acid chain; its full sequence is Large ribosomal subunit protein eL20 (80 aa).

It belongs to the eukaryotic ribosomal protein eL20 family. As to quaternary structure, part of the 50S ribosomal subunit. Binds 23S rRNA.

This is Large ribosomal subunit protein eL20 from Methanopyrus kandleri (strain AV19 / DSM 6324 / JCM 9639 / NBRC 100938).